A 397-amino-acid polypeptide reads, in one-letter code: Presenilin-like protein At2g29900 (397 aa).

The Cytoplasmic portion of the chain corresponds to M1–E17. A helical membrane pass occupies residues L18–I38. Topologically, residues L39 to N76 are lumenal. Residues S77–L97 traverse the membrane as a helical segment. Topologically, residues R98–Y106 are cytoplasmic. A helical membrane pass occupies residues M107–I127. The Lumenal segment spans residues D128–D135. Residues S136–M156 traverse the membrane as a helical segment. Residues S157–K158 are Cytoplasmic-facing. Residues F159–F179 traverse the membrane as a helical segment. The Lumenal segment spans residues T180–W188. A helical membrane pass occupies residues V189–L209. D198 is a catalytic residue. Over R210–G305 the chain is Cytoplasmic. Residues L306 to V326 form a helical membrane-spanning segment. D318 is an active-site residue. At G327 to T336 the chain is on the lumenal side. A helical membrane pass occupies residues V337–V357. Residues Y358–P366 lie on the Cytoplasmic side of the membrane. A PAL motif is present at residues P363 to L365. An intramembrane region (helical) is located at residues V367–V387. Residues V388 to F397 lie on the Cytoplasmic side of the membrane.

It belongs to the peptidase A22A family. As to quaternary structure, homodimer. Probable component of the gamma-secretase complex, a complex composed of a presenilin homodimer, nicastrin, APH1 and PEN2.

It localises to the endoplasmic reticulum membrane. The protein localises to the golgi apparatus membrane. Functionally, probable subunit of the gamma-secretase complex, an endoprotease complex that catalyzes the intramembrane cleavage of integral membrane proteins such as Notch receptors. The protein is Presenilin-like protein At2g29900 of Arabidopsis thaliana (Mouse-ear cress).